The chain runs to 159 residues: MNISIISIGKLKEKYLKQGIAEYLKRLSSYAKVEVIELPDEKAPENLSAAEMLIVKEKEGIRILDKISDDTHVIALAIEGKQKSSEEFAVSIDRLATYGKSKITFVIGGSLGLSSEVMKRSNESLSFSKMTLPHQLMRLVLLEQVYRAFRINRGEPYHK.

Residues leucine 76, glycine 108, and 127–132 (FSKMTL) each bind S-adenosyl-L-methionine.

Belongs to the RNA methyltransferase RlmH family. In terms of assembly, homodimer.

The protein localises to the cytoplasm. The catalysed reaction is pseudouridine(1915) in 23S rRNA + S-adenosyl-L-methionine = N(3)-methylpseudouridine(1915) in 23S rRNA + S-adenosyl-L-homocysteine + H(+). Its function is as follows. Specifically methylates the pseudouridine at position 1915 (m3Psi1915) in 23S rRNA. The sequence is that of Ribosomal RNA large subunit methyltransferase H from Bacillus mycoides (strain KBAB4) (Bacillus weihenstephanensis).